Here is a 324-residue protein sequence, read N- to C-terminus: Hydroxyacylglutathione hydrolase 2, mitochondrial (324 aa).

The transit peptide at 1–64 (MQTISKASSA…KSIRVSKFCS (64 aa)) directs the protein to the mitochondrion. 2 residues coordinate Zn(2+): His-124 and His-126. The Fe cation site is built by Asp-128 and His-129. Residues His-182 and Asp-201 each contribute to the Zn(2+) site. Asp-201 and His-239 together coordinate Fe cation.

It belongs to the metallo-beta-lactamase superfamily. Glyoxalase II family. Monomer. The cofactor is Fe(3+). Requires Fe(2+) as cofactor. It depends on Zn(2+) as a cofactor.

It localises to the mitochondrion. It carries out the reaction an S-(2-hydroxyacyl)glutathione + H2O = a 2-hydroxy carboxylate + glutathione + H(+). It functions in the pathway secondary metabolite metabolism; methylglyoxal degradation; (R)-lactate from methylglyoxal: step 2/2. Thiolesterase that catalyzes the hydrolysis of S-D-lactoyl-glutathione to form glutathione and D-lactic acid. The chain is Hydroxyacylglutathione hydrolase 2, mitochondrial from Arabidopsis thaliana (Mouse-ear cress).